The chain runs to 371 residues: Aminomethyltransferase (371 aa).

Belongs to the GcvT family. In terms of assembly, the glycine cleavage system is composed of four proteins: P, T, L and H.

It catalyses the reaction N(6)-[(R)-S(8)-aminomethyldihydrolipoyl]-L-lysyl-[protein] + (6S)-5,6,7,8-tetrahydrofolate = N(6)-[(R)-dihydrolipoyl]-L-lysyl-[protein] + (6R)-5,10-methylene-5,6,7,8-tetrahydrofolate + NH4(+). Functionally, the glycine cleavage system catalyzes the degradation of glycine. The sequence is that of Aminomethyltransferase from Leptospira interrogans serogroup Icterohaemorrhagiae serovar Lai (strain 56601).